A 275-amino-acid chain; its full sequence is Voltage-dependent calcium channel gamma-7 subunit (275 aa).

4 consecutive transmembrane segments (helical) span residues 8–28 (ALTLLSSVFGACGLLLVGIAV), 103–123 (FPMVSLFLVFTAFVISNIGHI), 129–149 (ILAFVSGIFFILSGLSLVVGL), and 179–199 (FAFAASSFLLKEGAGVMSVYL). Phosphoserine occurs at positions 222, 225, and 273.

This sequence belongs to the PMP-22/EMP/MP20 family. CACNG subfamily. Interacts with CACNA1C. Identified in a complex with the L-type calcium channel subunits CACNA1C, CACNA2D1 and either CACNB1 or CACNB2. Acts as an auxiliary subunit for AMPA-selective glutamate receptors (AMPARs), such as GRIA1 and GRIA2. Detected in heart left ventricle. Widely expressed.

The protein resides in the cell membrane. Functionally, regulates the activity of L-type calcium channels that contain CACNA1C as pore-forming subunit. Regulates the trafficking and gating properties of AMPA-selective glutamate receptors (AMPARs). Promotes their targeting to the cell membrane and synapses and modulates their gating properties by slowing their rates of activation, deactivation and desensitization and by mediating their resensitization. Displays subunit-specific AMPA receptor regulation. Shows specificity only for GRIA1 and GRIA2. The chain is Voltage-dependent calcium channel gamma-7 subunit (CACNG7) from Homo sapiens (Human).